An 856-amino-acid polypeptide reads, in one-letter code: DNA mismatch repair protein MutS (856 aa).

Residue 609–616 (GPNMSGKS) participates in ATP binding.

Belongs to the DNA mismatch repair MutS family.

This protein is involved in the repair of mismatches in DNA. It is possible that it carries out the mismatch recognition step. This protein has a weak ATPase activity. The protein is DNA mismatch repair protein MutS of Finegoldia magna (strain ATCC 29328 / DSM 20472 / WAL 2508) (Peptostreptococcus magnus).